The chain runs to 844 residues: Leucine--tRNA ligase (844 aa).

The short motif at 39–49 is the 'HIGH' region element; the sequence is PYPSGRIHMGH. The 'KMSKS' region signature appears at 621–625; that stretch reads KMSKS. K624 is an ATP binding site.

It belongs to the class-I aminoacyl-tRNA synthetase family.

It localises to the cytoplasm. The enzyme catalyses tRNA(Leu) + L-leucine + ATP = L-leucyl-tRNA(Leu) + AMP + diphosphate. The sequence is that of Leucine--tRNA ligase from Paracoccus denitrificans (strain Pd 1222).